The sequence spans 537 residues: Phosphoenolpyruvate carboxykinase (ATP) (537 aa).

Residues Arg61, Tyr195, and Lys201 each coordinate substrate. ATP is bound by residues Lys201, His220, and 236 to 244 (GLSGTGKTT). Mn(2+) contacts are provided by Lys201 and His220. Position 257 (Asp257) interacts with Mn(2+). ATP is bound by residues Glu285, Arg323, and Thr448. Arg323 contributes to the substrate binding site.

Belongs to the phosphoenolpyruvate carboxykinase (ATP) family. Mn(2+) serves as cofactor.

The protein localises to the cytoplasm. It catalyses the reaction oxaloacetate + ATP = phosphoenolpyruvate + ADP + CO2. It functions in the pathway carbohydrate biosynthesis; gluconeogenesis. In terms of biological role, involved in the gluconeogenesis. Catalyzes the conversion of oxaloacetate (OAA) to phosphoenolpyruvate (PEP) through direct phosphoryl transfer between the nucleoside triphosphate and OAA. This chain is Phosphoenolpyruvate carboxykinase (ATP), found in Parvibaculum lavamentivorans (strain DS-1 / DSM 13023 / NCIMB 13966).